The primary structure comprises 1479 residues: MDDSPWPQCDIRVQDTFGPQVSGCYEDFDFTLLFEESILYLPPLLIAASVALLRIWQLRSTENLLKRSGLLSILKPTSTTRLSNAAIAIGFVASPIFAWLSFWEHARSLRPSTILNVYLLGTIPMDAARARTLFRMPGNSAIASIFATIVVCKVVLLVVEAMEKQRLLLDRGWAPEETAGILNRSFLWWFNPLLLSGYKQALTVDKLLAVDEDIGVEKSKDEIRRRWAQAVKQNASSLQDVLLAVYRTELWGGFLPRLCLIGVNYAQPFLVNRVVTFLGQPDTSTSRGVASGLIAAYAIVYMGIAVATAAFHHRSYRMVMMVRGGLILLIYDHTLTLNALSPSKNDSYTLITADIERIVSGLRSLHETWASLIEIALSLWLLETKIRVSAVAAAMVVLVCLLVSGALSGLLGVHQNLWLEAMQKRLNATLATIGSIKGIKATGRTNTLYETILQLRRTEIQKSLKFRELLVALVTLSYLSTTMAPTFAFGTYSILAKIRNMTPLLAAPAFSSLTIMTLLGQAVSGFVESLMGLRQAMASLERIRQYLVGKEAPEPSPNKPGVASTEGLVAWSASLDEPGLDPRVEMRRMSSLQHRFYNLGELQDGLIVLQNHTASWEKASKPVLTDINVTITRGSFVIVIGPIGSGKSTLLHSILGEVPHTTGIRTIQEVDTAFCAQTPWLTNTNVRDNILGASHFDPAWYNAVVKACALHRDFAQLPHGDRSMIGSKGILLSGGQKGRLALARALYARKALLVLDDVFAGLDPKTGQEVFTSLFGARGLLRQGKTTTVLATNSTQNLSMADYIMVLGSEGRLIEQGTPTELLNSGSSLRLEELVKTREGKSKAEPERERPEYARALRNSVLGATPVAARRRFSDMAIYKLYIRTIGWGSWWIFIVLCSGFVVALTLSRENTLALPSACAGVDLLTACLEEIWLKFWTEANARNPHDRLGYYLSLFAVWSALAITFFLGACLHLMLRMVPKAAKIFHGSLLQTVMRAPLVFFSKTDSGEISNHFSQDLELIDMELPRALIGAVIALILCISAMAVIVYSSNYLAATIPGLLGLLYLVQMFYLRTSQQLRVLELETRAPLLSHYMETIQGLVSLRAFGWSKHFKDRHHGHLKVAQQSAYLLFCAQIWLTLTLDIIVAFLAIILVSIAVTVKNSSAASIGLALVNLIAFGANMKGLVYNWTALENAMGAIARVRDFTTETPCEIQVGESHSPSPGWPQRGLIKFKSVTASYDFTSHPVLNDVTFTVQPGEKLAICGRTGCGKSSLVSSLLRLLEVRNGAIEVDGIDISTLSREDVRMSLNVLPQEPFFYHGTIRQNLDPNCLSSDEEILETLALLGLREVISKKGGLDVAMDDGFLSHGQQQLLCLARAILKKSRILILDEVTSSVDQETETLITRVLRDRLQDQTVISIAHRLNTIMDYDKVIILDKGCIVEQGNPQVLALQRSIFASLLRSGDEEPGNGHKHESEGEEE.

Transmembrane regions (helical) follow at residues leucine 32–leucine 52, leucine 82–phenylalanine 102, and isoleucine 142–methionine 162. Residues asparagine 183 and asparagine 234 are each glycosylated (N-linked (GlcNAc...) asparagine). 2 helical membrane-spanning segments follow: residues tryptophan 251–valine 271 and serine 291–phenylalanine 311. Residues leucine 258–glutamine 535 enclose the ABC transmembrane type-1 1 domain. N-linked (GlcNAc...) asparagine glycosylation is present at asparagine 345. 2 helical membrane passes run leucine 365 to leucine 382 and valine 391 to leucine 411. Asparagine 427 is a glycosylation site (N-linked (GlcNAc...) asparagine). 2 consecutive transmembrane segments (helical) span residues leucine 469 to phenylalanine 489 and proline 503 to valine 523. Residues isoleucine 607–valine 835 form the ABC transporter 1 domain. Residues asparagine 611 and asparagine 628 are each glycosylated (N-linked (GlcNAc...) asparagine). Position 641–648 (glycine 641–serine 648) interacts with ATP. N-linked (GlcNAc...) asparagine glycans are attached at residues asparagine 793 and asparagine 797. The next 5 membrane-spanning stretches (helical) occupy residues threonine 885–leucine 905, leucine 955–methionine 975, alanine 1028–tyrosine 1048, tyrosine 1052–leucine 1072, and isoleucine 1135–isoleucine 1155. The region spanning isoleucine 932–asparagine 1193 is the ABC transmembrane type-1 2 domain. N-linked (GlcNAc...) asparagine glycosylation occurs at asparagine 1161. Residues alanine 1165–valine 1185 form a helical membrane-spanning segment. An N-linked (GlcNAc...) asparagine glycan is attached at asparagine 1187. In terms of domain architecture, ABC transporter 2 spans isoleucine 1230–serine 1461. Glycine 1264–serine 1271 provides a ligand contact to ATP. The interval arginine 1460–glutamate 1479 is disordered. Over residues serine 1461–glutamate 1479 the composition is skewed to basic and acidic residues.

The protein belongs to the ABC transporter superfamily. ABCC family. Conjugate transporter (TC 3.A.1.208) subfamily.

Its subcellular location is the cell membrane. Its function is as follows. ABC transporter; part of the gene cluster that mediates the biosynthesis of echinocandin B, a fungal lipidated cyclic hexapeptide that acts as an antifungal agent. This chain is ABC transporter ecdL, found in Aspergillus rugulosus (Emericella rugulosa).